The sequence spans 352 residues: Respiratory nitrate reductase subunit beta (352 aa).

Residues 20 to 48 (VAMVMDLNKCIGCQTCTVACKSLWTEGGG) enclose the 4Fe-4S ferredoxin-type 1 domain. Positions 29, 32, 35, and 39 each coordinate [4Fe-4S] cluster. Disordered regions lie at residues 63 to 95 (KGYPRNWEESGGGWKSSEHKERKPGQIPDKEDY) and 111 to 131 (SDRPLRPDSDPEWGPNWDEDQ). A compositionally biased stretch (basic and acidic residues) spans 78–95 (SSEHKERKPGQIPDKEDY). 2 consecutive 4Fe-4S ferredoxin-type domains span residues 139–170 (SYYFYLPRICNHCTHPSCVEACPRKAIYKREE) and 172–201 (GIVLIDQERCRGYRYCVEGCPYKKVYYNAT). [4Fe-4S] cluster-binding residues include Cys148, Cys151, and Cys156. 3 residues coordinate [3Fe-4S] cluster: Cys160, Cys181, and Cys187. [4Fe-4S] cluster is bound by residues Cys191, Cys208, Cys211, Cys229, and Cys233.

As to quaternary structure, probable multiprotein complex; a catalytic heterodimer of an alpha and beta chain is proposed to associate with additional subunits involved in membrane attachment and electron transfer. [4Fe-4S] cluster serves as cofactor. Requires [3Fe-4S] cluster as cofactor.

The protein localises to the cell membrane. It catalyses the reaction nitrate + a quinol = a quinone + nitrite + H2O. With respect to regulation, inhibited by cyanide, azide and antimycin A. Enzyme stability is not dependent on salt concentration. In terms of biological role, the respiratory membrane-bound nitrate reductase enzyme complex plays a role in generation of metabolic energy by using nitrate as a terminal electron acceptor during anaerobic conditions. The beta chain is an electron transfer unit containing four cysteine clusters involved in the formation of iron-sulfur centers. This Haloferax mediterranei (strain ATCC 33500 / DSM 1411 / JCM 8866 / NBRC 14739 / NCIMB 2177 / R-4) (Halobacterium mediterranei) protein is Respiratory nitrate reductase subunit beta (narH).